Consider the following 362-residue polypeptide: MTDLTTLEADVLAQVAAAGDLAALDAVRVSALGKTGRVSGLLKTLGAMSPDERKERGAAINVLRDRVQTALNDKKAALETAALDARLASETLDLTLPAPRRRKGSVHPTMQTMDEMVAIFAEMGFAVAEGPDIEDDFHNFTALNFPPKHPAREMHDTFFFNPAKNEDGSDGERMLLRTHTSPVQVRTMLSQKPPIRIIAPGRTYRCDNDATHTPVFHQVEGLVIDKAIHMGHLKWTLETFLARFFETDAVKTQFRPHHFPFTEPSAETDVQCDRSGGEIKVGQGTSWLEILGCGMVHPNVLRACGIDPDEYQGFAFGMGVDRLGMLKYGMPDLRDMWSSDGRWLAHYGFSAFAAPNAASGLS.

E263 is a binding site for Mg(2+).

Belongs to the class-II aminoacyl-tRNA synthetase family. Phe-tRNA synthetase alpha subunit type 1 subfamily. As to quaternary structure, tetramer of two alpha and two beta subunits. The cofactor is Mg(2+).

It is found in the cytoplasm. It catalyses the reaction tRNA(Phe) + L-phenylalanine + ATP = L-phenylalanyl-tRNA(Phe) + AMP + diphosphate + H(+). This chain is Phenylalanine--tRNA ligase alpha subunit, found in Caulobacter sp. (strain K31).